The chain runs to 496 residues: Glycerol kinase (496 aa).

T12 is a binding site for ADP. Positions 12, 13, and 14 each coordinate ATP. T12 lines the sn-glycerol 3-phosphate pocket. R16 lines the ADP pocket. R82, E83, and Y134 together coordinate sn-glycerol 3-phosphate. R82, E83, and Y134 together coordinate glycerol. The residue at position 230 (H230) is a Phosphohistidine; by HPr. Position 244 (D244) interacts with sn-glycerol 3-phosphate. Glycerol-binding residues include D244 and Q245. Residues T266 and G309 each contribute to the ADP site. The ATP site is built by T266, G309, Q313, and G410. ADP contacts are provided by G410 and N414.

The protein belongs to the FGGY kinase family. Homotetramer and homodimer (in equilibrium). Post-translationally, the phosphoenolpyruvate-dependent sugar phosphotransferase system (PTS), including enzyme I, and histidine-containing protein (HPr) are required for the phosphorylation, which leads to the activation of the enzyme.

The catalysed reaction is glycerol + ATP = sn-glycerol 3-phosphate + ADP + H(+). Its pathway is polyol metabolism; glycerol degradation via glycerol kinase pathway; sn-glycerol 3-phosphate from glycerol: step 1/1. Its activity is regulated as follows. Activated by phosphorylation and inhibited by fructose 1,6-bisphosphate (FBP). In terms of biological role, key enzyme in the regulation of glycerol uptake and metabolism. Catalyzes the phosphorylation of glycerol to yield sn-glycerol 3-phosphate. The chain is Glycerol kinase from Geobacillus sp. (strain WCH70).